A 447-amino-acid chain; its full sequence is Argininosuccinate synthase (447 aa).

ATP is bound by residues 17–25 (AFSGGLDTS) and A43. Y99 is an L-citrulline binding site. The ATP site is built by G129 and T131. L-aspartate-binding residues include T131, N135, and D136. N135 contributes to the L-citrulline binding site. Residue D136 participates in ATP binding. L-citrulline is bound by residues R139 and S192. An ATP-binding site is contributed by D194. L-citrulline-binding residues include T201, E203, and E280.

It belongs to the argininosuccinate synthase family. Type 2 subfamily. Homotetramer.

The protein resides in the cytoplasm. The catalysed reaction is L-citrulline + L-aspartate + ATP = 2-(N(omega)-L-arginino)succinate + AMP + diphosphate + H(+). It functions in the pathway amino-acid biosynthesis; L-arginine biosynthesis; L-arginine from L-ornithine and carbamoyl phosphate: step 2/3. This is Argininosuccinate synthase from Salmonella newport (strain SL254).